Consider the following 257-residue polypeptide: Enterotoxin type E (257 aa).

Positions 1 to 27 are cleaved as a signal peptide; it reads MKKTAFILLLFIALTLTTSPLVNGSEK. An intrachain disulfide couples Cys-120 to Cys-130. 3 residues coordinate Zn(2+): His-211, His-249, and Asp-251.

The protein belongs to the staphylococcal/streptococcal toxin family. Interacts with host MHC class II molecules composed of alpha/HLA-DRA and beta/HLA-DRB1 chains. Interacts with host T-cell receptor beta variable TRBV7-9. It depends on Zn(2+) as a cofactor.

Its subcellular location is the secreted. In terms of biological role, staphylococcal enterotoxin that activates the host immune system by binding as unprocessed molecules to major histocompatibility (MHC) complex class II and T-cell receptor (TCR) molecules. In turn, this ternary complex activates a large number of T-lymphocytes initiating a systemic release of pro-inflammatory cytokines. Also causes the intoxication staphylococcal food poisoning syndrome. The sequence is that of Enterotoxin type E (entE) from Staphylococcus aureus.